A 614-amino-acid polypeptide reads, in one-letter code: Elongation factor 4 (614 aa).

Positions 10 to 192 constitute a tr-type G domain; sequence ALIRNFCIIA…EIVARIPPPV (183 aa). GTP contacts are provided by residues 22–27 and 139–142; these read DHGKST and NKID.

The protein belongs to the TRAFAC class translation factor GTPase superfamily. Classic translation factor GTPase family. LepA subfamily.

Its subcellular location is the cell membrane. The catalysed reaction is GTP + H2O = GDP + phosphate + H(+). Required for accurate and efficient protein synthesis under certain stress conditions. May act as a fidelity factor of the translation reaction, by catalyzing a one-codon backward translocation of tRNAs on improperly translocated ribosomes. Back-translocation proceeds from a post-translocation (POST) complex to a pre-translocation (PRE) complex, thus giving elongation factor G a second chance to translocate the tRNAs correctly. Binds to ribosomes in a GTP-dependent manner. This Thermobifida fusca (strain YX) protein is Elongation factor 4.